A 308-amino-acid chain; its full sequence is Porphobilinogen deaminase (308 aa).

Cysteine 241 is subject to S-(dipyrrolylmethanemethyl)cysteine.

Belongs to the HMBS family. In terms of assembly, monomer. Requires dipyrromethane as cofactor.

It catalyses the reaction 4 porphobilinogen + H2O = hydroxymethylbilane + 4 NH4(+). The protein operates within porphyrin-containing compound metabolism; protoporphyrin-IX biosynthesis; coproporphyrinogen-III from 5-aminolevulinate: step 2/4. Its function is as follows. Tetrapolymerization of the monopyrrole PBG into the hydroxymethylbilane pre-uroporphyrinogen in several discrete steps. This is Porphobilinogen deaminase from Staphylococcus aureus (strain MSSA476).